The sequence spans 146 residues: Cytochrome c-type biogenesis protein CcmE (146 aa).

Topologically, residues 1-8 (MHPKRKKR) are cytoplasmic. A helical; Signal-anchor for type II membrane protein transmembrane segment spans residues 9-29 (LLIVLAGLAVVAVASGLILNA). Over 30–146 (FRSNLVFFHT…IQRAGETVVQ (117 aa)) the chain is Periplasmic. Heme is bound by residues histidine 124 and tyrosine 128.

It belongs to the CcmE/CycJ family.

It is found in the cell inner membrane. Functionally, heme chaperone required for the biogenesis of c-type cytochromes. Transiently binds heme delivered by CcmC and transfers the heme to apo-cytochromes in a process facilitated by CcmF and CcmH. The protein is Cytochrome c-type biogenesis protein CcmE of Laribacter hongkongensis (strain HLHK9).